A 1149-amino-acid chain; its full sequence is Potassium channel subfamily U member 1 (1149 aa).

Residues 1–24 lie on the Extracellular side of the membrane; sequence MFQTKLRNESWEDLQKMSCTTEIQ. The chain crosses the membrane as a helical span at residues 25-45; sequence VAFILSSFMTFISGLIILLIF. Topologically, residues 46–101 are cytoplasmic; the sequence is RLIWRTVKKWQIIKGTGIILELFTSGSIRRNHVRSLHFHGRFRDRIEMLLSAQTFV. The helical transmembrane segment at 102-122 threads the bilayer; it reads GQVLVILVFVLSIGSLIIYFI. Residues 123–138 lie on the Extracellular side of the membrane; it reads NSADPVGSCSSYEDKT. A helical membrane pass occupies residues 139–159; the sequence is IPVDLVFNAFFSFYFGLRFMA. The Cytoplasmic portion of the chain corresponds to 160-163; the sequence is ADDK. Residues 164–184 form a helical membrane-spanning segment; that stretch reads IKFWLEMNSIVDIFTIPPTFI. Topologically, residues 185-188 are extracellular; sequence SYYL. Residues 189–209 traverse the membrane as a helical; Voltage-sensor segment; the sequence is KSNWLGLRFLRALRLLELPRI. Over 210-226 the chain is Cytoplasmic; sequence LQILRAIKTSNSVKFSK. Residues 227 to 247 form a helical membrane-spanning segment; the sequence is LLSIVLSTWFTAAGFIHLVEN. The Extracellular portion of the chain corresponds to 248 to 259; that stretch reads SGDPWLKGRNSQ. The pore-forming intramembrane region spans 260-282; that stretch reads NISYFDSVYLVMATTSTVGFGDV. The Selectivity for potassium motif lies at 276–279; that stretch reads TVGF. At 283-291 the chain is on the extracellular side; the sequence is VAKTSLGRT. A helical transmembrane segment spans residues 292 to 312; that stretch reads FIIFFTLGSLILFANYIPEMV. Topologically, residues 313-1149 are cytoplasmic; it reads ELFANKRKYT…EDPFAYSEPL (837 aa). 2 consecutive RCK N-terminal domains span residues 331–473 and 713–884; these read KKFI…DNII and RNHI…EGSL. Residues 829–845 show a composition bias toward low complexity; the sequence is IDSSSDSSPSVSEETAS. 2 disordered regions span residues 829-851 and 1106-1149; these read IDSSSDSSPSVSEETASCTNGHN and ARNQ…SEPL. Over residues 1106-1120 the composition is skewed to polar residues; sequence ARNQIRTNSSITSQK.

This sequence belongs to the potassium channel family. Calcium-activated (TC 1.A.1.3) subfamily. KCa5.1/KCNU1 sub-subfamily. In terms of assembly, homotetramer; which constitutes the calcium-activated potassium channel. Interacts with LRRC52; this interaction changes some channel gating properties, such as shifting gating to more negative potentials at a given pH. Testis-specific.

It localises to the cell membrane. It is found in the cell projection. The protein resides in the cilium. The protein localises to the flagellum membrane. It carries out the reaction K(+)(in) = K(+)(out). With respect to regulation, regulated by changes in cytosolic pH; activated by alkalization. VU0546110 acts as a selective inhibitor. The auxiliary subunit LRRC52 shifts the activation of KCNU1 to more negative potentials at a given pH. Testis-specific potassium channel activated by both intracellular pH and membrane voltage that mediates export of K(+). Represents the primary spermatozoan K(+) current. The channel underlies a pH-triggered membrane hyperpolarization during the process of sperm capacitation, as sperm encounter the alkaline environment near the ovum in the female reproductive tract, thereby playing an essential for male fertility. This chain is Potassium channel subfamily U member 1 (KCNU1), found in Macaca fascicularis (Crab-eating macaque).